The following is a 278-amino-acid chain: S-methyl-5'-thioadenosine phosphorylase (278 aa).

Residues Ser-13, Arg-55 to His-56, and Thr-88 to Ala-89 contribute to the phosphate site. Met-190 contacts substrate. Residue Thr-191 participates in phosphate binding. Asp-214 to Asp-216 contacts substrate.

Belongs to the PNP/MTAP phosphorylase family. MTAP subfamily. In terms of assembly, homotrimer.

It localises to the cytoplasm. Its subcellular location is the nucleus. It catalyses the reaction S-methyl-5'-thioadenosine + phosphate = 5-(methylsulfanyl)-alpha-D-ribose 1-phosphate + adenine. It functions in the pathway amino-acid biosynthesis; L-methionine biosynthesis via salvage pathway; S-methyl-5-thio-alpha-D-ribose 1-phosphate from S-methyl-5'-thioadenosine (phosphorylase route): step 1/1. Its function is as follows. Catalyzes the reversible phosphorylation of S-methyl-5'-thioadenosine (MTA) to adenine and 5-methylthioribose-1-phosphate. Involved in the breakdown of MTA, a major by-product of polyamine biosynthesis. Responsible for the first step in the methionine salvage pathway after MTA has been generated from S-adenosylmethionine. Has broad substrate specificity with 6-aminopurine nucleosides as preferred substrates. The polypeptide is S-methyl-5'-thioadenosine phosphorylase (Anopheles gambiae (African malaria mosquito)).